Reading from the N-terminus, the 256-residue chain is Histone H1 (256 aa).

Composition is skewed to low complexity over residues Met-1 to Thr-19 and Lys-27 to Thr-43. Disordered regions lie at residues Met-1–Val-53 and Gly-108–Lys-256. Ser-11 carries the post-translational modification Phosphoserine. The H15 domain maps to Ser-45–Ala-119. 2 stretches are compositionally biased toward basic and acidic residues: residues Ala-121–Val-140 and Lys-176–Lys-193. Over residues Thr-194–Ala-229 the composition is skewed to low complexity. Residues Lys-245 to Lys-256 are compositionally biased toward basic residues.

The protein belongs to the histone H1/H5 family. In terms of processing, phosphorylated in oocytes during prophase I of meiosis.

It is found in the nucleus. Its subcellular location is the chromosome. Its function is as follows. Histones H1 are necessary for the condensation of nucleosome chains into higher-order structures. The chain is Histone H1 (His1) from Drosophila melanogaster (Fruit fly).